We begin with the raw amino-acid sequence, 181 residues long: Inner membrane-spanning protein YciB (181 aa).

5 helical membrane passes run 22-42 (IYTA…VTYA), 50-70 (MQLI…FLHD), 80-100 (IVYC…KPVI), 122-142 (WVLF…EMPL), and 148-168 (FKVF…GMYV).

The protein belongs to the YciB family.

It is found in the cell inner membrane. Functionally, plays a role in cell envelope biogenesis, maintenance of cell envelope integrity and membrane homeostasis. The polypeptide is Inner membrane-spanning protein YciB (Aliivibrio fischeri (strain ATCC 700601 / ES114) (Vibrio fischeri)).